Here is a 123-residue protein sequence, read N- to C-terminus: Large ribosomal subunit protein bL17 (123 aa).

Belongs to the bacterial ribosomal protein bL17 family. In terms of assembly, part of the 50S ribosomal subunit. Contacts protein L32.

The polypeptide is Large ribosomal subunit protein bL17 (Borreliella burgdorferi (strain ZS7) (Borrelia burgdorferi)).